Reading from the N-terminus, the 306-residue chain is Ciliary microtubule inner protein 2B (306 aa).

The tract at residues 61 to 92 is disordered; the sequence is QSNPFPPPRDHSFDGGSQELGGRRQHPGDPNL.

The protein belongs to the CIMIP2 family. As to expression, expressed in airway epithelial cells.

It is found in the cytoplasm. The protein localises to the cytoskeleton. Its subcellular location is the cilium axoneme. In terms of biological role, microtubule inner protein (MIP) part of the dynein-decorated doublet microtubules (DMTs) in cilia axoneme, which is required for motile cilia beating. The chain is Ciliary microtubule inner protein 2B (cimip2b) from Xenopus tropicalis (Western clawed frog).